Consider the following 633-residue polypeptide: Phosphomethylpyrimidine synthase (633 aa).

Substrate-binding positions include Asn245, Met274, Tyr303, His339, 359–361 (SRG), 400–403 (DGLR), and Glu439. His443 provides a ligand contact to Zn(2+). Tyr466 contacts substrate. Position 507 (His507) interacts with Zn(2+). 3 residues coordinate [4Fe-4S] cluster: Cys587, Cys590, and Cys595.

It belongs to the ThiC family. As to quaternary structure, homodimer. It depends on [4Fe-4S] cluster as a cofactor.

The catalysed reaction is 5-amino-1-(5-phospho-beta-D-ribosyl)imidazole + S-adenosyl-L-methionine = 4-amino-2-methyl-5-(phosphooxymethyl)pyrimidine + CO + 5'-deoxyadenosine + formate + L-methionine + 3 H(+). It participates in cofactor biosynthesis; thiamine diphosphate biosynthesis. Catalyzes the synthesis of the hydroxymethylpyrimidine phosphate (HMP-P) moiety of thiamine from aminoimidazole ribotide (AIR) in a radical S-adenosyl-L-methionine (SAM)-dependent reaction. The polypeptide is Phosphomethylpyrimidine synthase (Neisseria gonorrhoeae (strain ATCC 700825 / FA 1090)).